A 365-amino-acid polypeptide reads, in one-letter code: Pre-small/secreted glycoprotein (365 aa).

The signal sequence occupies residues 1 to 32 (MGASGILQLPRERFRKTSFFVWVIILFHKVFS). N-linked (GlcNAc...) asparagine; by host glycosylation occurs at Asn-40. Intrachain disulfides connect Cys-108-Cys-135 and Cys-121-Cys-147. 4 N-linked (GlcNAc...) asparagine; by host glycosylation sites follow: Asn-204, Asn-228, Asn-257, and Asn-268.

Belongs to the filoviruses glycoprotein family. In terms of assembly, homodimer; disulfide-linked. The homodimers are linked by two disulfide bonds in a parallel orientation. Monomer. In terms of processing, this precursor is processed into mature sGP and delta-peptide by host furin or furin-like proteases. The cleavage site corresponds to the furin optimal cleavage sequence [KR]-X-[KR]-R. Post-translationally, N-glycosylated. O-glycosylated.

It localises to the secreted. In terms of biological role, seems to possess an anti-inflammatory activity as it can reverse the barrier-decreasing effects of TNF alpha. Might therefore contribute to the lack of inflammatory reaction seen during infection in spite the of extensive necrosis and massive virus production. Does not seem to be involved in activation of primary macrophages. Does not seem to interact specifically with neutrophils. Viroporin that permeabilizes mammalian cell plasma membranes. It acts by altering permeation of ionic compounds and small molecules. This activity may lead to viral enterotoxic activity. The chain is Pre-small/secreted glycoprotein (GP) from Epomops franqueti (Franquet's epauletted fruit bat).